Reading from the N-terminus, the 821-residue chain is High affinity potassium transporter (821 aa).

The span at Met-1–Asn-10 shows a compositional bias: polar residues. A disordered region spans residues Met-1–Met-47. The Cytoplasmic portion of the chain corresponds to Met-1–Gln-57. A compositionally biased stretch (low complexity) spans Asn-17–Asn-27. A helical membrane pass occupies residues Val-58–Leu-78. Over Tyr-79–Ser-101 the chain is Extracellular. A helical transmembrane segment spans residues Ile-102–Leu-122. Over Gly-123–Lys-190 the chain is Cytoplasmic. The helical transmembrane segment at Leu-191–Met-211 threads the bilayer. The Extracellular segment spans residues Ser-212–Asp-238. A helical membrane pass occupies residues Val-239 to Asn-259. A topological domain (cytoplasmic) is located at residue Lys-260. Residues Ile-261–Ile-281 traverse the membrane as a helical segment. Over Tyr-282–His-306 the chain is Extracellular. The chain crosses the membrane as a helical span at residues Ser-307–Ala-327. At Asp-328–Thr-340 the chain is on the cytoplasmic side. A helical membrane pass occupies residues Leu-341–Ile-361. The Extracellular segment spans residues Lys-362–Val-386. Residues Met-387 to Phe-407 form a helical membrane-spanning segment. Residues Ser-408 to Lys-434 are Cytoplasmic-facing. The helical transmembrane segment at Val-435–Phe-455 threads the bilayer. Topologically, residues Lys-456 to Ala-463 are extracellular. Asn-460 carries N-linked (GlcNAc...) asparagine glycosylation. Residues Ala-464 to Met-484 traverse the membrane as a helical segment. Over Thr-485 to Asn-491 the chain is Cytoplasmic. A helical membrane pass occupies residues Ile-492–Ser-512. Topologically, residues Asn-513–Lys-516 are extracellular. Residues Ile-517–Phe-537 traverse the membrane as a helical segment. Residues Trp-538–Ile-821 lie on the Cytoplasmic side of the membrane.

The protein belongs to the HAK/KUP transporter (TC 2.A.72) family.

Its subcellular location is the membrane. In terms of biological role, major high-affinity potassium uptake protein. The chain is High affinity potassium transporter (HAK1) from Schwanniomyces occidentalis (Yeast).